The chain runs to 545 residues: T-complex protein 1 subunit gamma (545 aa).

The residue at position 1 (Met1) is an N-acetylmethionine. A disordered region spans residues 1 to 24 (MMGHRPVLVLSQNTKRESGRKVQS). Ser11 is modified (phosphoserine). Lys15 participates in a covalent cross-link: Glycyl lysine isopeptide (Lys-Gly) (interchain with G-Cter in SUMO2). Gly42 serves as a coordination point for ADP. An ATP-binding site is contributed by Gly42. Residue Asp93 participates in Mg(2+) binding. The ADP site is built by Gly94, Thr95, Thr96, Ser97, Thr162, and Lys163. ATP-binding residues include Gly94, Thr95, and Thr96. At Ser170 the chain carries Phosphoserine. Lys222 bears the N6-acetyllysine mark. Residues Ser243 and Ser244 each carry the phosphoserine modification. Phosphotyrosine is present on Tyr247. Glycyl lysine isopeptide (Lys-Gly) (interchain with G-Cter in SUMO2) cross-links involve residues Lys248 and Lys249. Ser252 is modified (phosphoserine). Cys366 and Cys372 form a disulfide bridge. A Glycyl lysine isopeptide (Lys-Gly) (interchain with G-Cter in SUMO2) cross-link involves residue Lys381. Residue Gly411 coordinates ADP. Gly411 is an ATP binding site. Thr430 and Thr459 each carry phosphothreonine. Positions 482, 483, 497, and 502 each coordinate ADP. Gly482 lines the ATP pocket. Glu497 serves as a coordination point for ATP. A disordered region spans residues 526–545 (HKKKGDDQNRQTGAPDAGQE).

This sequence belongs to the TCP-1 chaperonin family. In terms of assembly, component of the chaperonin-containing T-complex (TRiC), a hexadecamer composed of two identical back-to-back stacked rings enclosing a protein folding chamber. Each ring is made up of eight different subunits: TCP1/CCT1, CCT2, CCT3, CCT4, CCT5, CCT6A/CCT6, CCT7, CCT8. Interacts with PACRG. Interacts with DNAAF4. Interacts with DLEC1.

The protein resides in the cytoplasm. It carries out the reaction ATP + H2O = ADP + phosphate + H(+). In terms of biological role, component of the chaperonin-containing T-complex (TRiC), a molecular chaperone complex that assists the folding of actin, tubulin and other proteins upon ATP hydrolysis. The TRiC complex mediates the folding of WRAP53/TCAB1, thereby regulating telomere maintenance. As part of the TRiC complex may play a role in the assembly of BBSome, a complex involved in ciliogenesis regulating transports vesicles to the cilia. This chain is T-complex protein 1 subunit gamma (Cct3), found in Rattus norvegicus (Rat).